Reading from the N-terminus, the 97-residue chain is uncharacterized protein (97 aa).

This is an uncharacterized protein from Escherichia coli O157:H7.